The sequence spans 555 residues: MASRKDERAAKEERAQAAAELAAKELRDVNQDRERGIKVVEHKEEVSGGPGVIGSILKSVQGTLGQAKEVVVGKAHDTAEVSRENTDYAYDKGREGGDVAAQKAEEAKEKAKMAKDTTMGKAGEYKDYTAQKAEEAKEKAAQKAEETKEKAGEYKNYTAQKAGEAKDTTLGKAGEYKDYAAQKAAEAKDTTAQKAAEAKEKTGEYKDYAAQKAAEAKVLAAQKAAEAKDTTGKDGEYKDYAAQKAAEAKDATMQKTGEYKDYAAQKTAETKDATMEKAKEYKEYAAQKAAEAKDATMQKTGEYKDYSAQKAAETKDATMEKTKEYKDYTAQKAAETKDATMEKAKEAKDTTVQKTGEYKDYAAEKAKEGKDVTVEKAKEGKDTTVGKMTELKDSAADAARKAMDMFLGKKEEVKGKAGETAEAAKEKYEDTEFAARKKMEELKLQEEGVKDEAKQRAEADRETAGDRGSAAKGTIFGAMGSVKDAIVGKLTMPSDVVKDKQQQEAVIKVDETRPGAVAEALKAADQMHGQAFNDVGKMGDEEVIVERKETRQGKM.

Residues 83–115 show a composition bias toward basic and acidic residues; sequence RENTDYAYDKGREGGDVAAQKAEEAKEKAKMAK. 2 disordered regions span residues 83 to 118 and 132 to 151; these read RENT…KDTT and KAEE…KEKA. 17 repeat units span residues 97–114, 115–125, 126–140, 141–154, 155–176, 177–191, 192–205, 206–216, 217–237, 238–259, 260–281, 282–303, 304–325, 326–343, 344–358, 359–376, and 377–391. Residues 97-391 are 17 X approximate tandem repeats; the sequence is GDVAAQKAEE…DTTVGKMTEL (295 aa). The disordered stretch occupies residues 184 to 204; that stretch reads AAEAKDTTAQKAAEAKEKTGE. Positions 444-465 are enriched in basic and acidic residues; sequence LQEEGVKDEAKQRAEADRETAG. Positions 444–472 are disordered; it reads LQEEGVKDEAKQRAEADRETAGDRGSAAK.

The protein belongs to the LEA type 4 family.

The protein localises to the cytoplasm. The protein resides in the secreted. It is found in the cell wall. May play a role in late embryogeny. The sequence is that of Embryonic protein DC-8 from Daucus carota (Wild carrot).